Reading from the N-terminus, the 123-residue chain is MARIVGVEIPSNKKVHIALRYLYGIGPTRAMEICKNTGVDPDKRVKELTEDEISKIASFIQQNYKVEGELRTEVMRNIKRLMDIGCYRGLRHKLGLPVRGQRTRSNARTRKGPRPSRIKKKGK.

The disordered stretch occupies residues 97-123 (PVRGQRTRSNARTRKGPRPSRIKKKGK). Over residues 101–123 (QRTRSNARTRKGPRPSRIKKKGK) the composition is skewed to basic residues.

Belongs to the universal ribosomal protein uS13 family. As to quaternary structure, part of the 30S ribosomal subunit. Forms a loose heterodimer with protein S19. Forms two bridges to the 50S subunit in the 70S ribosome.

In terms of biological role, located at the top of the head of the 30S subunit, it contacts several helices of the 16S rRNA. In the 70S ribosome it contacts the 23S rRNA (bridge B1a) and protein L5 of the 50S subunit (bridge B1b), connecting the 2 subunits; these bridges are implicated in subunit movement. Contacts the tRNAs in the A and P-sites. This Fervidobacterium nodosum (strain ATCC 35602 / DSM 5306 / Rt17-B1) protein is Small ribosomal subunit protein uS13.